The primary structure comprises 475 residues: Bifunctional purple acid phosphatase 26 (475 aa).

The signal sequence occupies residues 1-30 (MNHLVIISVFLSSVLLLYRGESGITSSFIR). The N-linked (GlcNAc...) asparagine glycan is linked to asparagine 103. Fe cation-binding residues include aspartate 162, aspartate 189, and tyrosine 192. Residue aspartate 189 coordinates Zn(2+). Residues asparagine 227 and histidine 312 each contribute to the Zn(2+) site. Asparagine 227 contacts substrate. The Proton donor role is filled by histidine 322. A Zn(2+)-binding site is contributed by histidine 349. 349 to 351 (HVH) contacts substrate. Histidine 351 lines the Fe cation pocket. 2 N-linked (GlcNAc...) asparagine glycosylation sites follow: asparagine 365 and asparagine 422.

This sequence belongs to the metallophosphoesterase superfamily. Purple acid phosphatase family. As to quaternary structure, homodimer. Fe cation is required as a cofactor. It depends on Zn(2+) as a cofactor. In terms of processing, glycosylated. As to expression, expressed in roots, stems, leaves, flowers and siliques.

It localises to the vacuole. It carries out the reaction a phosphate monoester + H2O = an alcohol + phosphate. The catalysed reaction is 2 a phenolic donor + H2O2 = 2 a phenolic radical donor + 2 H2O. Activated by Mg(2+), Co(2+), Mn(2+) and Ba(2+). Inhibited by Fe(2+), Cu(2+), Zn(2+), NaF, molybdate, arsenate, vanadate and inorganic phosphate. No effect of tartrate, Asp, Gln, glutathione, Asn, ascorbic acid and phosphite. Metallo-phosphoesterase involved in phosphate metabolism. Acid phosphatase activity with phosphoenolpyruvate, inorganic pyrophosphate, phenyl-phosphate and p-nitrophenyl-phosphate as the most effective substrates. No activity with phytic acid, phosphocholine or bis-p-nitrophenyl-phosphate. Has a peroxidase activity at alkaline pH. In Arabidopsis thaliana (Mouse-ear cress), this protein is Bifunctional purple acid phosphatase 26 (PAP26).